Here is a 941-residue protein sequence, read N- to C-terminus: 26S proteasome regulatory subunit RPN2 (941 aa).

10 PC repeats span residues 363–396 (SATASLGVIHKGNLIDGKKVMAPYLPGSRSSSRF), 400–437 (GSLYGLGLIYAGFGRDIVDYLKTHLIENSGTTGDEDVD), 442–476 (GASLGVGLAAMGTANNEVYEALKDVLYNDVATSGE), 477–511 (AAAFGIGLTLLGTGDETAINDLFTYAQETSHGNIT), 513–546 (GLSMALALINYGRQEQADELIDKMLASENSLIRY), 547–582 (GGAFSIALAYVGTGNNKVVKKLLHLAVSDSNDDVRR), 583–615 (AAVTALGFVLLRDYTTVPRIVQLLAESHNAHDR), 617–651 (GAAFALGIACAGKGLQAAIDVLEPMTKDPADFVRQ), 652–689 (AAMISLSLVMIQQTEKMNPKVASINSHFLSVITNKHQE), and 695–731 (GACVALGIMNAGGRNVTIQLENAETGTLDTKSVVGLA). Residues 808–854 (KARAKKTKKEKDTNEDDKKKKEKDLKKEETKKDDAKKESEAEEDFNK) are disordered. The span at 816 to 854 (KEKDTNEDDKKKKEKDLKKEETKKDDAKKESEAEEDFNK) shows a compositional bias: basic and acidic residues.

Belongs to the proteasome subunit S1 family.

Acts as a regulatory subunit of the 26S proteasome which is involved in the ATP-dependent degradation of ubiquitinated proteins. This chain is 26S proteasome regulatory subunit RPN2 (RPN2), found in Candida glabrata (strain ATCC 2001 / BCRC 20586 / JCM 3761 / NBRC 0622 / NRRL Y-65 / CBS 138) (Yeast).